Here is a 1009-residue protein sequence, read N- to C-terminus: Serine/threonine-protein phosphatase BSL2 homolog (1009 aa).

A disordered region spans residues Met1 to Gly48. Residues Ser29–Met45 are compositionally biased toward low complexity. Kelch repeat units follow at residues Ser136 to Ala182, Phe240 to Ala288, Leu293 to Ala344, Ser349 to Gly396, and Met417 to Gly463. The tract at residues Gln549–Gln572 is disordered. Over residues Glu553–Ser563 the composition is skewed to basic and acidic residues. 4 residues coordinate Mn(2+): Asp711, His713, Asp745, and Asn777. His778 acts as the Proton donor in catalysis. The Mn(2+) site is built by His830 and His909. The interval Asn984–Ile1009 is disordered.

It belongs to the PPP phosphatase family. BSU subfamily. Mn(2+) serves as cofactor.

It localises to the nucleus. It carries out the reaction O-phospho-L-seryl-[protein] + H2O = L-seryl-[protein] + phosphate. It catalyses the reaction O-phospho-L-threonyl-[protein] + H2O = L-threonyl-[protein] + phosphate. In Oryza sativa subsp. japonica (Rice), this protein is Serine/threonine-protein phosphatase BSL2 homolog (BSL2).